The primary structure comprises 184 residues: Phosphodiesterase YfcE (184 aa).

Mn(2+) contacts are provided by D9, H11, D37, N73, H105, H127, and H129.

This sequence belongs to the metallophosphoesterase superfamily. YfcE family. The cofactor is Mn(2+).

Its function is as follows. Shows phosphodiesterase activity. This Escherichia coli O157:H7 protein is Phosphodiesterase YfcE (yfcE).